The following is a 915-amino-acid chain: Protein translocase subunit SecA (915 aa).

ATP-binding positions include Gln87, 105 to 109 (GEGKT), and Asp516. The interval 866-915 (MTYGAPSDGDIGGSVEDEPLELPEGARVGRNDPCPCGSGKKYKQCHGKLS) is disordered. Residues Cys899, Cys901, Cys910, and His911 each contribute to the Zn(2+) site. Residues 905–915 (KKYKQCHGKLS) show a composition bias toward basic residues.

It belongs to the SecA family. In terms of assembly, monomer and homodimer. Part of the essential Sec protein translocation apparatus which comprises SecA, SecYEG and auxiliary proteins SecDF-YajC and YidC. Requires Zn(2+) as cofactor.

Its subcellular location is the cell inner membrane. It localises to the cytoplasm. The catalysed reaction is ATP + H2O + cellular proteinSide 1 = ADP + phosphate + cellular proteinSide 2.. Its function is as follows. Part of the Sec protein translocase complex. Interacts with the SecYEG preprotein conducting channel. Has a central role in coupling the hydrolysis of ATP to the transfer of proteins into and across the cell membrane, serving both as a receptor for the preprotein-SecB complex and as an ATP-driven molecular motor driving the stepwise translocation of polypeptide chains across the membrane. The chain is Protein translocase subunit SecA from Delftia acidovorans (strain DSM 14801 / SPH-1).